Here is a 347-residue protein sequence, read N- to C-terminus: Ribosomal RNA large subunit methyltransferase M (347 aa).

Residues S184, 217-220, D236, D256, and D272 contribute to the S-adenosyl-L-methionine site; that span reads APGG. Catalysis depends on K301, which acts as the Proton acceptor.

The protein belongs to the class I-like SAM-binding methyltransferase superfamily. RNA methyltransferase RlmE family. RlmM subfamily. In terms of assembly, monomer.

Its subcellular location is the cytoplasm. The enzyme catalyses cytidine(2498) in 23S rRNA + S-adenosyl-L-methionine = 2'-O-methylcytidine(2498) in 23S rRNA + S-adenosyl-L-homocysteine + H(+). Functionally, catalyzes the 2'-O-methylation at nucleotide C2498 in 23S rRNA. This is Ribosomal RNA large subunit methyltransferase M from Xanthomonas oryzae pv. oryzae (strain KACC10331 / KXO85).